The sequence spans 31 residues: Cytochrome b6-f complex subunit 6 (31 aa).

The helical transmembrane segment at 4-24 threads the bilayer; it reads ITSYFGFLLAALTITSALLIG.

Belongs to the PetL family. In terms of assembly, the 4 large subunits of the cytochrome b6-f complex are cytochrome b6, subunit IV (17 kDa polypeptide, PetD), cytochrome f and the Rieske protein, while the 4 small subunits are PetG, PetL, PetM and PetN. The complex functions as a dimer.

Its subcellular location is the plastid. The protein resides in the chloroplast thylakoid membrane. Component of the cytochrome b6-f complex, which mediates electron transfer between photosystem II (PSII) and photosystem I (PSI), cyclic electron flow around PSI, and state transitions. PetL is important for photoautotrophic growth as well as for electron transfer efficiency and stability of the cytochrome b6-f complex. The chain is Cytochrome b6-f complex subunit 6 from Magnolia grandiflora (Southern magnolia).